A 300-amino-acid chain; its full sequence is Arrestin domain-containing protein 4 (300 aa).

2 consecutive short sequence motifs (PPxY motif) follow at residues 231–234 (PPNY) and 276–279 (PPLY).

Belongs to the arrestin family. Interacts with ADRB2. Interacts (via PPxY motifs) with ITCH, NEDD4L and WWP2. Interacts with AVPR2. Identified in a complex containing at least ARRDC4, AVPR2 and HGS. Interacts with SLC11A2; controls the incorporation of SLC11A2 into extracellular vesicles through an ubiquitination-dependent mechanism. Interacts with TRIM65.

The protein localises to the early endosome. It is found in the cell membrane. It localises to the cytoplasmic vesicle. Its function is as follows. Functions as an adapter recruiting ubiquitin-protein ligases to their specific substrates. Plays a role in endocytosis of activated G protein-coupled receptors (GPCRs) Through an ubiquitination-dependent mechanism also plays a role in the incorporation of SLC11A2 into extracellular vesicles. May play a role in glucose uptake. Participates in innate immune response by promoting IFIH1/MDA5 activation through interaction with TRIM65. In Rattus norvegicus (Rat), this protein is Arrestin domain-containing protein 4 (Arrdc4).